The sequence spans 305 residues: 4-diphosphocytidyl-2-C-methyl-D-erythritol kinase (305 aa).

Lys15 is an active-site residue. 99 to 109 (PMGGGIGGGSS) provides a ligand contact to ATP. Asp141 is an active-site residue.

Belongs to the GHMP kinase family. IspE subfamily.

The enzyme catalyses 4-CDP-2-C-methyl-D-erythritol + ATP = 4-CDP-2-C-methyl-D-erythritol 2-phosphate + ADP + H(+). It participates in isoprenoid biosynthesis; isopentenyl diphosphate biosynthesis via DXP pathway; isopentenyl diphosphate from 1-deoxy-D-xylulose 5-phosphate: step 3/6. In terms of biological role, catalyzes the phosphorylation of the position 2 hydroxy group of 4-diphosphocytidyl-2C-methyl-D-erythritol. The protein is 4-diphosphocytidyl-2-C-methyl-D-erythritol kinase of Marinomonas sp. (strain MWYL1).